The primary structure comprises 124 residues: Small ribosomal subunit protein uS12 (124 aa).

Aspartate 89 is modified (3-methylthioaspartic acid).

The protein belongs to the universal ribosomal protein uS12 family. As to quaternary structure, part of the 30S ribosomal subunit. Contacts proteins S8 and S17. May interact with IF1 in the 30S initiation complex.

Functionally, with S4 and S5 plays an important role in translational accuracy. In terms of biological role, interacts with and stabilizes bases of the 16S rRNA that are involved in tRNA selection in the A site and with the mRNA backbone. Located at the interface of the 30S and 50S subunits, it traverses the body of the 30S subunit contacting proteins on the other side and probably holding the rRNA structure together. The combined cluster of proteins S8, S12 and S17 appears to hold together the shoulder and platform of the 30S subunit. This is Small ribosomal subunit protein uS12 from Shewanella loihica (strain ATCC BAA-1088 / PV-4).